The following is a 499-amino-acid chain: MVTTLPQAFYSNFLGNAPSWYKKAICLFLLINPVIFLISPYIAGWVLILEFIFTLAMALKCYPLQPGGLLAIEAVLIGMVSPHTVYEEVSGNLEVILLLVFMVAGIYFMKELLLHLFTKILLSIRSKAILSLLFSLVAAVLSAFLDALTVTAVIISVAVGFYSVYHKVASGKHFHHDHDHGDDESVHHDHRADLEQFRSFLRSLLMHAAVGTALGGVCTQVGEPQNLLIAQRLGWDFIEFFVRMAPISIPVLIAGLITCVILEKTRWFGYGDDIPASVRKILEDFNEAEKKKMTLQHESKLITQAIVALILVVALALHLAEVGLIGLTVIILATAFCGVIEEHQIGKAFEEALPFTSLLVVFFAVVGVIHEQHLFTGIINYVLGLEKSVQPGMFFIANGVLSMISDNVFVATVYIDEVRTAFNDGLIDRAHYEALAVAINTGTNLPSVATPNGQAAFLFLLTSAIAPLIRLSYGKMVWMALPYTLVMGGLGYVMIVITI.

Helical transmembrane passes span 33 to 53 (PVIF…EFIF), 66 to 86 (PGGL…HTVY), 89 to 109 (VSGN…IYFM), 128 to 148 (AILS…LDAL), 237 to 257 (FIEF…AGLI), 305 to 325 (AIVA…VGLI), 326 to 346 (GLTV…HQIG), 349 to 369 (FEEA…VGVI), 393 to 413 (MFFI…VATV), 449 to 469 (ATPN…APLI), and 477 to 497 (VWMA…MIVI).

This sequence belongs to the NhaB Na(+)/H(+) (TC 2.A.34) antiporter family.

The protein resides in the cell inner membrane. It catalyses the reaction 2 Na(+)(in) + 3 H(+)(out) = 2 Na(+)(out) + 3 H(+)(in). In terms of biological role, na(+)/H(+) antiporter that extrudes sodium in exchange for external protons. The sequence is that of Na(+)/H(+) antiporter NhaB from Hahella chejuensis (strain KCTC 2396).